The sequence spans 327 residues: 2-phosphoglycerate kinase (327 aa).

Residues 1–20 show a composition bias toward basic and acidic residues; it reads MSEKSSRKERDEKTEKETAR. The disordered stretch occupies residues 1–27; sequence MSEKSSRKERDEKTEKETARQGKHRRI. The 87-residue stretch at 25–111 folds into the ATP-cone domain; the sequence is RRIRVKSRHY…LWRRIKKREE (87 aa).

The protein belongs to the 2-phosphoglycerate kinase family. A divalent metal cation serves as cofactor.

It catalyses the reaction (2R)-2-phosphoglycerate + ATP = (2R)-2,3-bisphosphoglycerate + ADP + H(+). It functions in the pathway thermoadapter biosynthesis; cyclic 2,3-diphosphoglycerate biosynthesis; cyclic 2,3-diphosphoglycerate from 2-phospho-D-glycerate: step 1/2. In terms of biological role, catalyzes the phosphorylation of 2-phosphoglycerate to 2,3-diphosphoglycerate. Involved in the biosynthesis of cyclic 2,3-bisphosphoglycerate, a thermoprotectant. The chain is 2-phosphoglycerate kinase from Methanopyrus kandleri (strain AV19 / DSM 6324 / JCM 9639 / NBRC 100938).